We begin with the raw amino-acid sequence, 241 residues long: Putative hydrolase 080R (241 aa).

Residues 50–241 form the Nudix hydrolase domain; it reads FPDLSFNLMV…VIKVQKIMIL (192 aa). Positions 136–157 match the Nudix box motif; sequence GHCNGNEPVLSTLLREFREETT. Residues glutamate 151, glutamate 155, and aspartate 204 each contribute to the Mg(2+) site.

It belongs to the Nudix hydrolase family.

This chain is Putative hydrolase 080R, found in Aedes vexans (Inland floodwater mosquito).